Here is a 287-residue protein sequence, read N- to C-terminus: Putative holocytochrome-c1 synthase (287 aa).

Polar residues predominate over residues 1–12 (MRGFGSDSSQAS). Disordered stretches follow at residues 1-63 (MRGF…QPSS) and 81-100 (QSQS…SAPL). 2 stretches are compositionally biased toward low complexity: residues 31–63 (QARA…QPSS) and 81–92 (QSQSANSTQQAQ).

This sequence belongs to the cytochrome c-type heme lyase family.

Its subcellular location is the mitochondrion inner membrane. The catalysed reaction is holo-[cytochrome c] = apo-[cytochrome c] + heme b. In terms of biological role, probable lyase that catalyzes the covalent linking of the heme group to the cytochrome C apoprotein to produce the mature functional cytochrome. The chain is Putative holocytochrome-c1 synthase from Chaetomium thermophilum (strain DSM 1495 / CBS 144.50 / IMI 039719) (Thermochaetoides thermophila).